A 31-amino-acid polypeptide reads, in one-letter code: Aspartate racemase (31 aa).

The disordered stretch occupies residues 1–31; sequence PVAPEYLFKKEEDKGANKEEEEVAPELGIRA. Over residues 7–18 the composition is skewed to basic and acidic residues; it reads LFKKEEDKGANK.

The protein belongs to the aspartate/glutamate racemases family. It depends on pyridoxal 5'-phosphate as a cofactor.

The enzyme catalyses L-aspartate = D-aspartate. Inhibited by hydroxylamine, aminooxyacetate, phenylhydrazine and sodium borohydride. Highly specific toward aspartate and entirely inactive on glutamate, alanine and serine. The sequence is that of Aspartate racemase from Anadara broughtonii (Blood clam).